Here is a 212-residue protein sequence, read N- to C-terminus: Ras-like protein (212 aa).

15–22 (GGGGVGKS) is a binding site for GTP. Positions 37–45 (YDPTIEDSY) match the Effector region motif. Residues 62–66 (DTAGQ) and 121–124 (NKCD) contribute to the GTP site. Residues C205 and C206 are each lipidated (S-palmitoyl cysteine). C209 is modified (cysteine methyl ester). A lipid anchor (S-geranylgeranyl cysteine) is attached at C209. Residues 210–212 (IVM) constitute a propeptide, removed in mature form.

Belongs to the small GTPase superfamily. Ras family.

The protein localises to the cell membrane. It carries out the reaction GTP + H2O = GDP + phosphate + H(+). Its activity is regulated as follows. Alternates between an inactive form bound to GDP and an active form bound to GTP. Activated by a guanine nucleotide-exchange factor (GEF) and inactivated by a GTPase-activating protein (GAP). The polypeptide is Ras-like protein (rasA) (Emericella nidulans (strain FGSC A4 / ATCC 38163 / CBS 112.46 / NRRL 194 / M139) (Aspergillus nidulans)).